The chain runs to 503 residues: ATP synthase subunit alpha (503 aa).

169–176 lines the ATP pocket; it reads GDRSTGKT.

It belongs to the ATPase alpha/beta chains family. F-type ATPases have 2 components, CF(1) - the catalytic core - and CF(0) - the membrane proton channel. CF(1) has five subunits: alpha(3), beta(3), gamma(1), delta(1), epsilon(1). CF(0) has three main subunits: a(1), b(2) and c(9-12). The alpha and beta chains form an alternating ring which encloses part of the gamma chain. CF(1) is attached to CF(0) by a central stalk formed by the gamma and epsilon chains, while a peripheral stalk is formed by the delta and b chains.

It localises to the cell membrane. The enzyme catalyses ATP + H2O + 4 H(+)(in) = ADP + phosphate + 5 H(+)(out). Functionally, produces ATP from ADP in the presence of a proton gradient across the membrane. The alpha chain is a regulatory subunit. This Dehalococcoides mccartyi (strain ATCC BAA-2100 / JCM 16839 / KCTC 5957 / BAV1) protein is ATP synthase subunit alpha.